Here is a 512-residue protein sequence, read N- to C-terminus: Cercosporin MFS transporter CTB4 (512 aa).

12 helical membrane-spanning segments follow: residues 72 to 92 (WVITMSLALYALSTTFSSSVF), 110 to 130 (VVLGCTSLFMVGFATGPIFWG), 142 to 162 (LLAGYLGFAVLQLPIADARSL), 170 to 190 (FLGGFFGAAPSSILSGILADI), 202 to 222 (TVGAFLTIGPILGPLIGSVLV), 230 to 250 (WIANVVAIASFLIALSTFPFL), 306 to 326 (ILLMMTLYVSVSFGLLYNFFL), 343 to 363 (ASLPLISILVGAIIAGALLSF), 383 to 403 (LLLMMVGAVSLPAGMFLFAWT), 407 to 427 (TMNPWPQILSGIPTGFGIHLI), 456 to 476 (LFAAGFPILATSMYAAIGVKW), and 480 to 500 (ILALLAVAMIPIPILFYYFGA).

It belongs to the major facilitator superfamily. CAR1 family.

It localises to the cell membrane. MFS transporter; part of the gene cluster that mediates the biosynthesis of cercosporin, a light-activated, non-host-selective toxin. The perylenequinone chromophore of cercosporin absorbs light energy to attain an electronically-activated triplet state and produces active oxygen species such as the hydroxyl radical, superoxide, hydrogen peroxide or singlet oxygen upon reaction with oxygen molecules. These reactive oxygen species cause damage to various cellular components including lipids, proteins and nucleic acids. Responsible for secretion and accumulation of cercosporin, but does not play any roles in self-protection against the toxicity of cercosporin. The polypeptide is Cercosporin MFS transporter CTB4 (Cercospora nicotianae (Barn spot disease fungus)).